A 354-amino-acid chain; its full sequence is MIPKKIIIMAGGSGGHVFPGLTIARYLIEKGWLVNWIGTKNSIESRIIPKYGIKIHYISIKGLRNTSLKNLIISPIYILRAYYAVKKIIKTWSPDIVLGMGGYVSGPGGVASWNCNIPLLLHEQNKIAGITNKWLSRISTKNMQASPGVLRNAEVVGNPVCQSIIKVPNPINRFKNRTGLLRVLVIGGSQGSSILNRILPEVSFLLKEKIIFWHQTGNYELEKTKKKYNKLRLNQNLITSFIKNIASAYEWADLIICRSGALTVSEISIVGLGAIFIPYPHKDKQQHRNAEDLELIGAAKIIDQSNLNTKLIVNILNSLDRDKLFIMAKKAHSLGVRDAIFNIFNVINKISKKT.

UDP-N-acetyl-alpha-D-glucosamine-binding positions include 13-15, asparagine 125, serine 189, isoleucine 242, 261-266, and glutamine 286; these read SGG and ALTVSE.

The protein belongs to the glycosyltransferase 28 family. MurG subfamily.

It is found in the cell inner membrane. It carries out the reaction di-trans,octa-cis-undecaprenyl diphospho-N-acetyl-alpha-D-muramoyl-L-alanyl-D-glutamyl-meso-2,6-diaminopimeloyl-D-alanyl-D-alanine + UDP-N-acetyl-alpha-D-glucosamine = di-trans,octa-cis-undecaprenyl diphospho-[N-acetyl-alpha-D-glucosaminyl-(1-&gt;4)]-N-acetyl-alpha-D-muramoyl-L-alanyl-D-glutamyl-meso-2,6-diaminopimeloyl-D-alanyl-D-alanine + UDP + H(+). The protein operates within cell wall biogenesis; peptidoglycan biosynthesis. Functionally, cell wall formation. Catalyzes the transfer of a GlcNAc subunit on undecaprenyl-pyrophosphoryl-MurNAc-pentapeptide (lipid intermediate I) to form undecaprenyl-pyrophosphoryl-MurNAc-(pentapeptide)GlcNAc (lipid intermediate II). The sequence is that of UDP-N-acetylglucosamine--N-acetylmuramyl-(pentapeptide) pyrophosphoryl-undecaprenol N-acetylglucosamine transferase from Buchnera aphidicola subsp. Acyrthosiphon pisum (strain APS) (Acyrthosiphon pisum symbiotic bacterium).